The chain runs to 361 residues: Phosphoserine aminotransferase (361 aa).

The L-glutamate site is built by S9 and R42. Pyridoxal 5'-phosphate is bound by residues 76 to 77 (AR), W103, T153, D173, and Q196. At K197 the chain carries N6-(pyridoxal phosphate)lysine. Residue 238-239 (NT) coordinates pyridoxal 5'-phosphate.

This sequence belongs to the class-V pyridoxal-phosphate-dependent aminotransferase family. SerC subfamily. As to quaternary structure, homodimer. The cofactor is pyridoxal 5'-phosphate.

It is found in the cytoplasm. It carries out the reaction O-phospho-L-serine + 2-oxoglutarate = 3-phosphooxypyruvate + L-glutamate. The catalysed reaction is 4-(phosphooxy)-L-threonine + 2-oxoglutarate = (R)-3-hydroxy-2-oxo-4-phosphooxybutanoate + L-glutamate. Its pathway is amino-acid biosynthesis; L-serine biosynthesis; L-serine from 3-phospho-D-glycerate: step 2/3. It participates in cofactor biosynthesis; pyridoxine 5'-phosphate biosynthesis; pyridoxine 5'-phosphate from D-erythrose 4-phosphate: step 3/5. Catalyzes the reversible conversion of 3-phosphohydroxypyruvate to phosphoserine and of 3-hydroxy-2-oxo-4-phosphonooxybutanoate to phosphohydroxythreonine. This is Phosphoserine aminotransferase from Wigglesworthia glossinidia brevipalpis.